A 335-amino-acid polypeptide reads, in one-letter code: Transcriptional coactivator YAP1-B (335 aa).

Low complexity predominate over residues 1-13 (MEPGSQQQPSAPG). A disordered region spans residues 1 to 21 (MEPGSQQQPSAPGQQPPPVGH). Position 30 is a phosphoserine; by LATS1 and LATS2 (S30). Residues 114–124 (MNQQRLSQSAP) show a composition bias toward polar residues. Residues 114–146 (MNQQRLSQSAPVKSPPALQPQSPPSGVLGSGGN) are disordered. Over residues 126–136 (KSPPALQPQSP) the composition is skewed to pro residues. The tract at residues 137 to 335 (PSGVLGSGGN…LDKESFLTWL (199 aa)) is transactivation domain. Residues 145–173 (GNQQMRLQQLQMEKERLRLKHQELLRQVR) are a coiled coil.

Belongs to the YAP1 family. Phosphorylated by lats1 and lats2; leading to cytoplasmic translocation and inactivation.

It localises to the cytoplasm. It is found in the nucleus. The protein resides in the cell junction. Its subcellular location is the tight junction. The protein localises to the cell membrane. Its function is as follows. Transcriptional regulator which can act both as a coactivator and a corepressor and is the critical downstream regulatory target in the Hippo signaling pathway that plays a pivotal role in organ size control and tumor suppression by restricting proliferation and promoting apoptosis. Plays a key role in tissue tension and 3D tissue shape by regulating cortical actomyosin network formation. The polypeptide is Transcriptional coactivator YAP1-B (Xenopus laevis (African clawed frog)).